A 531-amino-acid chain; its full sequence is Tubulin-folding cofactor E (531 aa).

The 45-residue stretch at 32 to 76 folds into the CAP-Gly domain; sequence GDVEGYSGTWIGVDWDQDGDGKHNGSVNGVFYFNGRSQSSASFVR. 9 LRR repeats span residues 84-109, 159-183, 185-213, 233-256, 260-284, 285-308, 318-342, 344-366, and 474-497; these read ITLLQALELRYRTISTKDEEDEMYVL, LPNLKLLDLTGNLISDWEEIGALCE, LPALTTLNLSCNSLSSDIKSLPQLKNIRV, LPGIEELHLMGNMISTITSTSSSD, FNSLRLLNLDDNCISDWSEVLKLSQ, LPCLEQLYLNKNKLSRIFQSVNGT, FPSLSCLLLGANNIGDLASVDALNG, PQLVDIRLSENPISDPVRGGVPR, and VGKLKILSENFFKLKSIKPRLFLQ.

It belongs to the TBCE family. As to quaternary structure, supercomplex made of cofactors A to E. Cofactors A and D function by capturing and stabilizing tubulin in a quasi-native conformation. Cofactor E binds to the cofactor D-tubulin complex; interaction with cofactor C then causes the release of tubulin polypeptides that are committed to the native state.

It is found in the cytoplasm. Its function is as follows. Essential tubulin-folding protein involved in the tubulin folding pathway. Not essential for cell viability. Probably involved in the binding of alpha-tubulin in the multimeric supercomplex. This Arabidopsis thaliana (Mouse-ear cress) protein is Tubulin-folding cofactor E (TFCE).